The chain runs to 212 residues: MLEIFDVSFSLMSNNKLDEVFALRKGTFKDRLDWTVNCINGMEFDEYDNEHTTYLLGVKEGKIICSVRFIEMKYPNMITGTFFSYFDGLNIPEGNYIESSRFFVDRDRVRNLIGTRNPACLTLFLAMINYARKYHYDGILTIVSHPMLTLLKRSGWRISIIQQGLSEKQEKIYLLHLPTDDESRYALIERITRITNAESEQLTTLPLLVPLA.

Belongs to the autoinducer synthase family.

The catalysed reaction is a fatty acyl-[ACP] + S-adenosyl-L-methionine = an N-acyl-L-homoserine lactone + S-methyl-5'-thioadenosine + holo-[ACP] + H(+). Its function is as follows. Required for the synthesis of OHHL (N-(3-oxohexanoyl)-L-homoserine lactone), an autoinducer molecule which binds to ExpR and thus acts in virulence (soft rot disease) through the activation of genes for plant tissue macerating enzymes. This Dickeya dadantii (strain 3937) (Erwinia chrysanthemi (strain 3937)) protein is Acyl-homoserine-lactone synthase (expI).